Here is a 101-residue protein sequence, read N- to C-terminus: Small ribosomal subunit protein uS14 (101 aa).

Belongs to the universal ribosomal protein uS14 family. Part of the 30S ribosomal subunit. Contacts proteins S3 and S10.

Binds 16S rRNA, required for the assembly of 30S particles and may also be responsible for determining the conformation of the 16S rRNA at the A site. The chain is Small ribosomal subunit protein uS14 from Blochmanniella pennsylvanica (strain BPEN).